The sequence spans 900 residues: MASGLPRFLQALPAEHGPEPLRTRVQEPDLQQWGLTGIRLRSYQLEGVNWLVQCFHCQNGCILGDEMGLGKTCQTIALLIYLVGRLNDEGPFLVLCPLSVLSNWKEEMERFAPGLSCVTYTGDKEERARLQQDLRQESGFHVLLTTYEICLKDASFLKSFSWSVLAVDEAHRLKNQSSLLHRTLSEFSAVFRLLLTGTPIQNSLRELYSLLCVVEPDLFCREQVEDFVQRYQDIEKESKSASELHRLLQPFLLRRVKAQVATELPKKTEVVVYHGMSALQKKYYKAILMKDLDAFENETAKKVKLQNILTQLRKCVDHPYLFDGVEPEPFEVGEHLIEASGKLHLLDRLLAFLYSGGHRVLLFSQMTHMLDILQDYMDYRGYSYERVDGSVRGEERHLAIKNFGNQPIFVFLLSTRAGGVGMNLTAADTVIFVDSDFNPQNDLQAAARAHRIGQNKSVKVIRLIGRDTVEEIVYRKAASKLQLTNMVIEGGHFTPGAQKPSAEADFQLSEILKFGLDKLLSSEGSSMEDIDLKSILGETKDGQWTPDALPAAAAAGGGSLEPEEGSELESRSYENHMYLFEGRDYSKEPSKEDRKSFEQLVNLQKTLLEKTSHGGRTLRNKGSVLIPGLAEGPIKRKKILSPEELEDRRKKRQEAAAKRKRLMEEKRKEKEEAEHRKKMAWWESNGYQSFCLSSEDSELEDLEGGDESSAELAYEDLDSTSINYVSGDVTHPQAGEEDAVIVHCVDDSGRWGRGGLFTALEVRSAEPRKIYELAGKMEDLSLGDVLLFPIDDKESRDKGQDLLALVVAQHRDRTNVLSGIKMAALEEGLKKIFLAAKKKKASVHLPRIGHATKGFNWYGTERLIRKHLATRGIPTYIYYFPRSKARHSQPASSSSAPLVP.

Residues valine 52 to aspartate 217 enclose the Helicase ATP-binding domain. Aspartate 65–threonine 72 is an ATP binding site. The DEAH box motif lies at aspartate 168 to histidine 171. Residues leucine 345–glutamine 507 form the Helicase C-terminal domain. Serine 534 carries the post-translational modification Phosphoserine. The segment at proline 546 to glutamate 569 is disordered. The segment at threonine 606–leucine 640 is regulatory linker segment (RLS). Phosphoserine is present on residues serine 612, serine 623, and serine 641. The segment at asparagine 620–lysine 678 is required for ATPase activity. The disordered stretch occupies residues serine 641–alanine 673. Residues glutamate 643 to alanine 680 are a coiled coil. The span at glutamine 653 to alanine 673 shows a compositional bias: basic and acidic residues. The 192-residue stretch at serine 709–proline 900 folds into the Macro domain. Serine 894 is subject to Phosphoserine.

Belongs to the SNF2/RAD54 helicase family. Interacts with nucleosomes; interacts with the acidic patch of histones. Interacts (via macro domain) with PARP1; interacts only when PARP1 is poly-ADP-ribosylated (PARylated). Interacts with CIAO1.

It is found in the nucleus. The protein localises to the chromosome. It catalyses the reaction ATP + H2O = ADP + phosphate + H(+). Its activity is regulated as follows. Adopts an inactive conformation in absence of DNA damage. Binding to poly-ADP-ribosylated histones activates the ATP-dependent chromatin remodeler activity. In terms of biological role, ATP-dependent chromatin remodeler that mediates chromatin-remodeling following DNA damage. Recruited to DNA damage sites through interaction with poly-ADP-ribose: specifically recognizes and binds histones that are poly-ADP-ribosylated on serine residues in response to DNA damage. Poly-ADP-ribose-binding activates the ATP-dependent chromatin remodeler activity, thereby regulating chromatin during DNA repair. Catalyzes nucleosome sliding away from DNA breaks in an ATP-dependent manner. Chromatin remodeling activity promotes PARP2 removal from chromatin. The polypeptide is Chromodomain-helicase-DNA-binding protein 1-like (Chd1l) (Mus musculus (Mouse)).